The primary structure comprises 983 residues: Bifunctional glutamine synthetase adenylyltransferase/adenylyl-removing enzyme (983 aa).

Residues 1 to 468 (MTVENAKALF…KQYAALFAQA (468 aa)) are adenylyl removase. Positions 473 to 983 (AASGNLVFTG…FDKLVGHGAD (511 aa)) are adenylyl transferase.

Belongs to the GlnE family. It depends on Mg(2+) as a cofactor.

The catalysed reaction is [glutamine synthetase]-O(4)-(5'-adenylyl)-L-tyrosine + phosphate = [glutamine synthetase]-L-tyrosine + ADP. The enzyme catalyses [glutamine synthetase]-L-tyrosine + ATP = [glutamine synthetase]-O(4)-(5'-adenylyl)-L-tyrosine + diphosphate. Involved in the regulation of glutamine synthetase GlnA, a key enzyme in the process to assimilate ammonia. When cellular nitrogen levels are high, the C-terminal adenylyl transferase (AT) inactivates GlnA by covalent transfer of an adenylyl group from ATP to specific tyrosine residue of GlnA, thus reducing its activity. Conversely, when nitrogen levels are low, the N-terminal adenylyl removase (AR) activates GlnA by removing the adenylyl group by phosphorolysis, increasing its activity. The regulatory region of GlnE binds the signal transduction protein PII (GlnB) which indicates the nitrogen status of the cell. The polypeptide is Bifunctional glutamine synthetase adenylyltransferase/adenylyl-removing enzyme (Brucella suis biovar 1 (strain 1330)).